Reading from the N-terminus, the 443-residue chain is Palmitoyltransferase pfa5 (443 aa).

Transmembrane regions (helical) follow at residues 17–37 (IIPPILIGVFGYASYAITKPL) and 57–77 (AGAAILAIYYVLLIPVLATYL). The interval 96–137 (CTQNQTGSDGSKHRHRRHRRRKSGHHLSKTTEKTDRSDGGDV) is disordered. A compositionally biased stretch (basic residues) spans 107-123 (KHRHRRHRRRKSGHHLS). Residues 124-137 (KTTEKTDRSDGGDV) are compositionally biased toward basic and acidic residues. Residues 175–225 (VYCSTCCQFKTDRAHHCREVDRCVRKMDHFCPWVGGVVSETSFKFFIQFIV) form the DHHC domain. 2 helical membrane passes run 220–240 (FIQFIVYTMIYCIFVLIVFAI) and 256–276 (WIVCLALSSLFGFFTFGVAIS). A disordered region spans residues 410 to 443 (AGLEVSTESESADPVGAAETPQHEQRRGKHRRRN).

This sequence belongs to the DHHC palmitoyltransferase family. PFA5 subfamily. Autopalmitoylated.

Its subcellular location is the membrane. It catalyses the reaction L-cysteinyl-[protein] + hexadecanoyl-CoA = S-hexadecanoyl-L-cysteinyl-[protein] + CoA. This is Palmitoyltransferase pfa5 (pfa5) from Aspergillus fumigatus (strain ATCC MYA-4609 / CBS 101355 / FGSC A1100 / Af293) (Neosartorya fumigata).